The primary structure comprises 309 residues: Protease HtpX homolog (309 aa).

A run of 2 helical transmembrane segments spans residues 7–27 and 28–48; these read FILL…IGGP and TGML…YWNA. His-134 lines the Zn(2+) pocket. Residue Glu-135 is part of the active site. A Zn(2+)-binding site is contributed by His-138. A run of 2 helical transmembrane segments spans residues 149–169 and 177–197; these read VTAT…FFGG and PGGL…AMLV. Residue Glu-206 coordinates Zn(2+). Residues 289 to 309 form a disordered region; it reads TRGRSGTAVPTGATGKSGPWG.

It belongs to the peptidase M48B family. Requires Zn(2+) as cofactor.

It is found in the cell inner membrane. This is Protease HtpX homolog from Caulobacter sp. (strain K31).